Consider the following 472-residue polypeptide: Na(+)/H(+) antiporter NhaA (472 aa).

The next 11 helical transmembrane spans lie at 48–68, 91–111, 129–149, 157–177, 185–205, 210–230, 237–257, 337–357, 374–394, 410–430, and 443–463; these read AGGIVLMGTTVLTLIAANSAW, MSLHDLINDGLMSLFFLVVGL, ALPVFAAAGGMVVPALVYFAV, AGWGIPMATDIAFAVGILVLL, LIIFLTALAIADDLGAVLVIA, HEISLGAIGFASAVLFLLLLL, HAIPYGVLGVLLWMALHHSGV, GPWVTFIVIPLFALNNVGIDF, VCLGLVFGKFTGISVFSWIAV, LLGVAWLGGIGFTMSLFISQL, and LGILTASLLSAMIGMTWLYFG.

Belongs to the NhaA Na(+)/H(+) (TC 2.A.33) antiporter family.

Its subcellular location is the cell inner membrane. It catalyses the reaction Na(+)(in) + 2 H(+)(out) = Na(+)(out) + 2 H(+)(in). Functionally, na(+)/H(+) antiporter that extrudes sodium in exchange for external protons. This is Na(+)/H(+) antiporter NhaA from Syntrophobacter fumaroxidans (strain DSM 10017 / MPOB).